Consider the following 285-residue polypeptide: 1-deoxypentalenic acid 11-beta-hydroxylase (285 aa).

Arg-117 contacts substrate. The Fe cation site is built by His-137 and Asp-139. Residues 137 to 139 (HQD) and Trp-153 contribute to the 2-oxoglutarate site. Arg-188 is a binding site for substrate. A Fe cation-binding site is contributed by His-226. 2-oxoglutarate contacts are provided by Ser-228 and Arg-240.

Belongs to the PhyH family. The cofactor is Fe cation. L-ascorbate is required as a cofactor.

It carries out the reaction 1-deoxypentalenate + 2-oxoglutarate + O2 = 1-deoxy-11beta-hydroxypentalenate + succinate + CO2. It participates in antibiotic biosynthesis; neopentalenolactone biosynthesis. Functionally, catalyzes the conversion of 1-deoxypentalenic acid to 11-beta-hydroxy-1-deoxypentalenic acid in the biosynthesis of neopentalenolactone antibiotic. This chain is 1-deoxypentalenic acid 11-beta-hydroxylase (ptlH), found in Streptomyces avermitilis (strain ATCC 31267 / DSM 46492 / JCM 5070 / NBRC 14893 / NCIMB 12804 / NRRL 8165 / MA-4680).